The primary structure comprises 219 residues: UPF0173 metal-dependent hydrolase LSL_0324 (219 aa).

The protein belongs to the UPF0173 family.

The chain is UPF0173 metal-dependent hydrolase LSL_0324 from Ligilactobacillus salivarius (strain UCC118) (Lactobacillus salivarius).